We begin with the raw amino-acid sequence, 210 residues long: PEYTIIYFNARGRCEAMRMLMADQGAQWKEEVVTSDDWQKGDLKKAAVYGQLPGFKDGDFTLYQSNAMLRLLARNHDLYGKNPREASLIDMVNDGVEDLRLKYLKMIYQNYENGKDDYVKALPTNLGHFERLLASNNEGKGFVVGAHISFADYNLVDLLHNHLVLAPDCLSGFPLLCAYVKRISSRPKLEAYLSSDAHKKRPINGNGKQQ.

A GST N-terminal domain is found at Pro-1 to Gly-80. Glutathione is bound by residues Tyr-7, Arg-13, Trp-38, Lys-44, Gln-51–Leu-52, and Gln-64–Ser-65. The 122-residue stretch at Asn-82–Ile-203 folds into the GST C-terminal domain.

This sequence belongs to the GST superfamily. Pi family. Homodimer.

The protein localises to the cytoplasm. The protein resides in the mitochondrion. It localises to the nucleus. The enzyme catalyses RX + glutathione = an S-substituted glutathione + a halide anion + H(+). Conjugation of reduced glutathione to a wide number of exogenous and endogenous hydrophobic electrophiles. The polypeptide is Glutathione S-transferase P 1 (Bufo bufo (European toad)).